A 415-amino-acid chain; its full sequence is Small RNA 2'-O-methyltransferase (415 aa).

S-adenosyl-L-methionine-binding residues include serine 99 and aspartate 117. Mg(2+) contacts are provided by glutamate 169, glutamate 172, and histidine 173.

Belongs to the methyltransferase superfamily. HEN1 family. It depends on Mg(2+) as a cofactor.

It localises to the cytoplasm. The catalysed reaction is small RNA 3'-end nucleotide + S-adenosyl-L-methionine = small RNA 3'-end 2'-O-methylnucleotide + S-adenosyl-L-homocysteine + H(+). Functionally, methyltransferase that adds a 2'-O-methyl group at the 3'-end of piRNAs, a class of 24 to 30 nucleotide RNAs that are generated by a Dicer-independent mechanism and are primarily derived from transposons and other repeated sequence elements. This probably protects the 3'-end of piRNAs from uridylation activity and subsequent degradation. Stabilization of piRNAs is essential for gametogenesis. The chain is Small RNA 2'-O-methyltransferase from Bombyx mori (Silk moth).